We begin with the raw amino-acid sequence, 133 residues long: Large ribosomal subunit protein bL20 (133 aa).

Belongs to the bacterial ribosomal protein bL20 family.

Its function is as follows. Binds directly to 23S ribosomal RNA and is necessary for the in vitro assembly process of the 50S ribosomal subunit. It is not involved in the protein synthesizing functions of that subunit. In Bartonella tribocorum (strain CIP 105476 / IBS 506), this protein is Large ribosomal subunit protein bL20.